Consider the following 190-residue polypeptide: Probable GTP-binding protein EngB (190 aa).

Positions 22–190 (VKREVAFAGR…LNELLKILIP (169 aa)) constitute an EngB-type G domain. GTP is bound by residues 30 to 37 (GRSNVGKS), 56 to 60 (GKTRS), 74 to 77 (DLPG), 141 to 144 (TKTD), and 173 to 175 (FSA). Serine 37 and threonine 58 together coordinate Mg(2+).

The protein belongs to the TRAFAC class TrmE-Era-EngA-EngB-Septin-like GTPase superfamily. EngB GTPase family. Mg(2+) serves as cofactor.

Necessary for normal cell division and for the maintenance of normal septation. The sequence is that of Probable GTP-binding protein EngB from Kosmotoga olearia (strain ATCC BAA-1733 / DSM 21960 / TBF 19.5.1).